Here is a 464-residue protein sequence, read N- to C-terminus: 3-isopropylmalate dehydratase large subunit (464 aa).

Residues Cys-345, Cys-405, and Cys-408 each contribute to the [4Fe-4S] cluster site.

It belongs to the aconitase/IPM isomerase family. LeuC type 1 subfamily. As to quaternary structure, heterodimer of LeuC and LeuD. It depends on [4Fe-4S] cluster as a cofactor.

The enzyme catalyses (2R,3S)-3-isopropylmalate = (2S)-2-isopropylmalate. Its pathway is amino-acid biosynthesis; L-leucine biosynthesis; L-leucine from 3-methyl-2-oxobutanoate: step 2/4. Its function is as follows. Catalyzes the isomerization between 2-isopropylmalate and 3-isopropylmalate, via the formation of 2-isopropylmaleate. In Flavobacterium johnsoniae (strain ATCC 17061 / DSM 2064 / JCM 8514 / BCRC 14874 / CCUG 350202 / NBRC 14942 / NCIMB 11054 / UW101) (Cytophaga johnsonae), this protein is 3-isopropylmalate dehydratase large subunit.